Reading from the N-terminus, the 168-residue chain is Inorganic pyrophosphatase (168 aa).

The substrate site is built by Lys-23, Arg-37, and Tyr-49. Asp-59, Asp-64, and Asp-96 together coordinate Mg(2+). Tyr-133 serves as a coordination point for substrate.

Belongs to the PPase family. As to quaternary structure, homohexamer. The cofactor is Mg(2+).

The protein localises to the cytoplasm. The enzyme catalyses diphosphate + H2O = 2 phosphate + H(+). Its function is as follows. Catalyzes the hydrolysis of inorganic pyrophosphate (PPi) forming two phosphate ions. This Methanosarcina acetivorans (strain ATCC 35395 / DSM 2834 / JCM 12185 / C2A) protein is Inorganic pyrophosphatase.